Reading from the N-terminus, the 493-residue chain is Xaa-Pro dipeptidase (493 aa).

Residue alanine 2 is modified to N-acetylalanine. Serine 167 is subject to Phosphoserine. Histidine 255 contacts a dipeptide. Mn(2+)-binding residues include aspartate 276, aspartate 287, and histidine 370. Aspartate 287 serves as a coordination point for a dipeptide. Residues histidine 377 and arginine 398 each contribute to the a dipeptide site. Residues glutamate 412 and glutamate 452 each coordinate Mn(2+).

This sequence belongs to the peptidase M24B family. Eukaryotic-type prolidase subfamily. Homodimer. Mn(2+) serves as cofactor.

It carries out the reaction Xaa-L-Pro dipeptide + H2O = an L-alpha-amino acid + L-proline. Specifically inhibited by the pseudodipeptide CQ31. Inhibition by CQ31 indirectly activates the CARD8 inflammasome: dipeptide accumulation following PEPD inactivation weaky inhibit dipeptidyl peptidases DDP8 and DPP9, relieving DPP8- and/or DPP9-mediated inhibition of CARD8. In terms of biological role, dipeptidase that catalyzes the hydrolysis of dipeptides with a prolyl (Xaa-Pro) or hydroxyprolyl residue in the C-terminal position. The preferred dipeptide substrate is Gly-Pro, but other Xaa-Pro dipeptides, such as Ala-Pro, Met-Pro, Phe-Pro, Val-Pro and Leu-Pro, can be cleaved. Plays an important role in collagen metabolism because the high level of iminoacids in collagen. The protein is Xaa-Pro dipeptidase of Homo sapiens (Human).